A 59-amino-acid polypeptide reads, in one-letter code: Large ribosomal subunit protein bL32 (59 aa).

It belongs to the bacterial ribosomal protein bL32 family.

This Polynucleobacter necessarius subsp. necessarius (strain STIR1) protein is Large ribosomal subunit protein bL32.